Here is a 226-residue protein sequence, read N- to C-terminus: Exosome complex component Rrp4 (226 aa).

Positions 61 to 135 (NDLVIGKVNS…RDPLVSISDR (75 aa)) constitute an S1 motif domain. The 60-residue stretch at 141–200 (DSGVLMEISPSKVPRLIGKKGSMIQMIEEATDAAVTIGQNGWVVVSCESPEGLLKAKKAI) folds into the KH domain.

It belongs to the RRP4 family. As to quaternary structure, component of the archaeal exosome complex. Forms a trimer of Rrp4 and/or Csl4 subunits. The trimer associates with a hexameric ring-like arrangement composed of 3 Rrp41-Rrp42 heterodimers.

It localises to the cytoplasm. Functionally, non-catalytic component of the exosome, which is a complex involved in RNA degradation. Increases the RNA binding and the efficiency of RNA degradation. Confers strong poly(A) specificity to the exosome. The protein is Exosome complex component Rrp4 of Nitrosopumilus maritimus (strain SCM1).